The following is a 133-amino-acid chain: Large ribosomal subunit protein uL15 (133 aa).

A disordered region spans residues 1-57; that stretch reads MALEKLTPAAGSTHATKRIGRGQGSGNGKTAGKGNKGQRARKGYNEKRGFEGGQQPL. Gly residues predominate over residues 21–35; sequence RGQGSGNGKTAGKGN.

The protein belongs to the universal ribosomal protein uL15 family. Part of the 50S ribosomal subunit.

Binds to the 23S rRNA. This chain is Large ribosomal subunit protein uL15, found in Campylobacter concisus (strain 13826).